A 256-amino-acid polypeptide reads, in one-letter code: Alcohol dehydrogenase (256 aa).

12–41 is a binding site for NAD(+); that stretch reads FVAGLGGIGLDTTKELLKRDLKNLVILDRI. S140 provides a ligand contact to substrate. Catalysis depends on Y153, which acts as the Proton acceptor.

Belongs to the short-chain dehydrogenases/reductases (SDR) family. As to quaternary structure, homodimer.

It catalyses the reaction a primary alcohol + NAD(+) = an aldehyde + NADH + H(+). The enzyme catalyses a secondary alcohol + NAD(+) = a ketone + NADH + H(+). This is Alcohol dehydrogenase from Drosophila ananassae (Fruit fly).